The following is a 442-amino-acid chain: Tyrosine-protein kinase transforming protein RYK (442 aa).

Residues 45 to 316 (LSLGKVLGEG…QLKVHLEKLL (272 aa)) form the Protein kinase domain. ATP is bound by residues 51–59 (LGEGEFGSV) and K77. D181 acts as the Proton acceptor in catalysis. At Y212 the chain carries Phosphotyrosine; by autocatalysis.

Belongs to the protein kinase superfamily. Tyr protein kinase family. AXL/UFO subfamily.

It localises to the host cell membrane. The enzyme catalyses L-tyrosyl-[protein] + ATP = O-phospho-L-tyrosyl-[protein] + ADP + H(+). The polypeptide is Tyrosine-protein kinase transforming protein RYK (V-RYK) (Avian retrovirus RPL30).